Consider the following 717-residue polypeptide: CRISPR-associated protein Cas8b (717 aa).

2 disordered regions span residues 263–283 (IGVF…DQSW) and 698–717 (HEKE…STTN). Acidic residues predominate over residues 701–717 (EDEDDQDTEEPAESTTN).

It localises to the cytoplasm. CRISPR (clustered regularly interspaced short palindromic repeat) is an adaptive immune system that provides protection against mobile genetic elements (viruses, transposable elements and conjugative plasmids). CRISPR clusters contain sequences complementary to antecedent mobile elements and target invading nucleic acids. CRISPR clusters are transcribed and processed into CRISPR RNA (crRNA). Plasmid targeted by CRISPR locus P1 transform wild-type cells very poorly. This subunit might be involved in stabilizing crRNA. The chain is CRISPR-associated protein Cas8b from Haloferax volcanii (strain ATCC 29605 / DSM 3757 / JCM 8879 / NBRC 14742 / NCIMB 2012 / VKM B-1768 / DS2) (Halobacterium volcanii).